We begin with the raw amino-acid sequence, 615 residues long: Chaperone protein HscA homolog (615 aa).

It belongs to the heat shock protein 70 family.

Chaperone involved in the maturation of iron-sulfur cluster-containing proteins. Has a low intrinsic ATPase activity which is markedly stimulated by HscB. The chain is Chaperone protein HscA homolog from Aeromonas hydrophila subsp. hydrophila (strain ATCC 7966 / DSM 30187 / BCRC 13018 / CCUG 14551 / JCM 1027 / KCTC 2358 / NCIMB 9240 / NCTC 8049).